The primary structure comprises 458 residues: MALWGGRFTQAADQRFKQFNDSLRFDYRLAEQDIVGSVAWSKALVTVGVLTADEQRQLEEALNVLLEEVRVNPQQILQSDAEDIHSWVEGKLIDKVGQLGKKLHTGRSRNDQVATDLKLWCKETVRELLTANRQLQSALVETAQANQDAVMPGYTHLQRAQPVTFAHWCLAYVEMLARDESRLQDTLKRLDVSPLGCGALAGTAYEIDREQLAGWLGFASATRNSLDSVSDRDHVLELLSDAAIGMVHLSRFAEDLIFFNSGEAGFVELSDRVTSGSSLMPQKKNPDALELIRGKCGRVQGALTGMMMTLKGLPLAYNKDMQEDKEGLFDALDTWLDCLHMAALVLDGIQVKRPRCQDAAQQGYANATELADYLVAKGVPFREAHHIVGEAVVEAIRQGKPLEALPLADLQKFSHVIGDDVYPMLSLQSCLDKRAAKGGVSPQQVAQAIDDARARLAL.

The protein belongs to the lyase 1 family. Argininosuccinate lyase subfamily.

It is found in the cytoplasm. It catalyses the reaction 2-(N(omega)-L-arginino)succinate = fumarate + L-arginine. The protein operates within amino-acid biosynthesis; L-arginine biosynthesis; L-arginine from L-ornithine and carbamoyl phosphate: step 3/3. This is Argininosuccinate lyase from Salmonella dublin (strain CT_02021853).